A 73-amino-acid chain; its full sequence is DNA-directed RNA polymerase subunit Rpo10 (73 aa).

Residues C7, C10, C44, and C45 each coordinate Zn(2+).

Belongs to the archaeal Rpo10/eukaryotic RPB10 RNA polymerase subunit family. As to quaternary structure, part of the RNA polymerase complex. Forms an Rpo3-Rpo10-Rpo11-Rpo12 complex upon coexpression. The cofactor is Zn(2+).

Its subcellular location is the cytoplasm. It carries out the reaction RNA(n) + a ribonucleoside 5'-triphosphate = RNA(n+1) + diphosphate. DNA-dependent RNA polymerase (RNAP) catalyzes the transcription of DNA into RNA using the four ribonucleoside triphosphates as substrates. This Methanocaldococcus jannaschii (strain ATCC 43067 / DSM 2661 / JAL-1 / JCM 10045 / NBRC 100440) (Methanococcus jannaschii) protein is DNA-directed RNA polymerase subunit Rpo10.